The sequence spans 388 residues: Xylose isomerase (388 aa).

Residues His-54 and Asp-57 contribute to the active site. Mg(2+)-binding residues include Glu-181, Glu-217, His-220, Asp-245, Asp-255, Asp-257, and Asp-287.

The protein belongs to the xylose isomerase family. Homotetramer. Requires Mg(2+) as cofactor.

The protein localises to the cytoplasm. It carries out the reaction alpha-D-xylose = alpha-D-xylulofuranose. This chain is Xylose isomerase, found in Streptomyces olivaceoviridis (Streptomyces corchorusii).